Reading from the N-terminus, the 92-residue chain is Small ribosomal subunit protein uS19 (92 aa).

This sequence belongs to the universal ribosomal protein uS19 family.

In terms of biological role, protein S19 forms a complex with S13 that binds strongly to the 16S ribosomal RNA. This chain is Small ribosomal subunit protein uS19, found in Vibrio parahaemolyticus serotype O3:K6 (strain RIMD 2210633).